Consider the following 2171-residue polypeptide: Voltage-dependent L-type calcium channel subunit alpha-1C (2171 aa).

At 1-154 (MLRALVQPAT…RACISIVEWK (154 aa)) the chain is on the cytoplasmic side. Residues 77–98 (GAALSWQAAIDAARQAKLMGSA) are calmodulin-binding. Positions 103-128 (ISTVSSTQRKRQQYGKPKKQGSTTAT) are disordered. Basic residues predominate over residues 110–121 (QRKRQQYGKPKK). The I repeat unit spans residues 141–438 (NPIRRACISI…LVLGVLSGEF (298 aa)). A helical transmembrane segment spans residues 155-173 (PFEIIILLTIFANCVALAI). Over 174–188 (YIPFPEDDSNATNSN) the chain is Extracellular. N-linked (GlcNAc...) asparagine glycosylation is present at Asn183. A helical transmembrane segment spans residues 189 to 209 (LERVEYLFLIIFTVEAFLKVI). Residues 210–218 (AYGLLFHPN) are Cytoplasmic-facing. Residues 219–239 (AYLRNGWNLLDFIIVVVGLFS) form a helical membrane-spanning segment. Topologically, residues 240–262 (AILEQATKADGANALGGKGAGFD) are extracellular. A helical transmembrane segment spans residues 263-281 (VKALRAFRVLRPLRLVSGV). Residues 282–298 (PSLQVVLNSIIKAMVPL) are Cytoplasmic-facing. The chain crosses the membrane as a helical span at residues 299–320 (LHIALLVLFVIIIYAIIGLELF). Topologically, residues 321-380 (MGKMHKTCYNQEGVADVPAEDDPSPCALETGHGRQCQNGTVCKPGWDGPKHGITNFDNFA) are extracellular. 2 disulfide bridges follow: Cys328–Cys356 and Cys346–Cys362. Asn358 carries N-linked (GlcNAc...) asparagine glycosylation. The segment at residues 381–402 (FAMLTVFQCITMEGWTDVLYWM) is an intramembrane region (pore-forming). Residues 391–394 (TMEG) carry the Selectivity filter of repeat I motif. A Ca(2+)-binding site is contributed by Glu393. Over 403–410 (QDAMGYEL) the chain is Extracellular. A helical membrane pass occupies residues 411–431 (PWVYFVSLVIFGSFFVLNLVL). Residues 432-554 (GVLSGEFSKE…RKCRAAVKSN (123 aa)) are Cytoplasmic-facing. The interval 458–475 (QQLEEDLKGYLDWITQAE) is AID/alpha-interaction domain; mediates interaction with the beta subunit. A disordered region spans residues 479–511 (PENEDEGMDEEKPRNMSMPTSETESVNTENVAG). Positions 495–508 (SMPTSETESVNTEN) are enriched in polar residues. Ser499 carries the phosphoserine modification. Thr506 carries the phosphothreonine modification. The II repeat unit spans residues 540–786 (NRFCRRKCRA…VFLAIAVDNL (247 aa)). Residues 555–573 (VFYWLVIFLVFLNTLTIAS) traverse the membrane as a helical segment. At 574-584 (EHYNQPHWLTE) the chain is on the extracellular side. A helical membrane pass occupies residues 585–605 (VQDTANKALLALFTAEMLLKM). At 606–616 (YSLGLQAYFVS) the chain is on the cytoplasmic side. Residues 617-636 (LFNRFDCFIVCGGILETILV) form a helical membrane-spanning segment. Residues 637–645 (ETKVMSPLG) lie on the Extracellular side of the membrane. Residues 646–664 (ISVLRCVRLLRIFKITRYW) form a helical membrane-spanning segment. Over 665–683 (NSLSNLVASLLNSVRSIAS) the chain is Cytoplasmic. A helical transmembrane segment spans residues 684 to 703 (LLLLLFLFIIIFSLLGMQLF). Topologically, residues 704 to 723 (GGKFNFDEMQTRRSTFDNFP) are extracellular. The pore-forming intramembrane region spans 724-745 (QSLLTVFQILTGEDWNSVMYDG). A Selectivity filter of repeat II motif is present at residues 734-737 (TGED). Glu736 serves as a coordination point for Ca(2+). The Extracellular segment spans residues 746–755 (IMAYGGPSFP). Residues 756–775 (GMLVCIYFIILFICGNYILL) traverse the membrane as a helical segment. At 776–930 (NVFLAIAVDN…LQCHRIVNDT (155 aa)) the chain is on the cytoplasmic side. Residues 794-891 (SAQKEEEEEK…EMPVGPRPRP (98 aa)) are disordered. Basic and acidic residues predominate over residues 813–836 (SPEKKQEVVGKPALEEAKEEKIEL). A phosphoserine mark is found at Ser838 and Ser845. Residues 859–906 (NESEDKSPYPNPETTGEEDEEEPEMPVGPRPRPLSELHLKEKAVPMPE) are interaction with STAC2. The segment covering 873–882 (TGEEDEEEPE) has biased composition (acidic residues). The III repeat unit spans residues 917–1199 (NRFRLQCHRI…IFVGFVIVTF (283 aa)). The chain crosses the membrane as a helical span at residues 931-949 (IFTNLILFFILLSSISLAA). Residues 950-961 (EDPVQHTSFRNH) are Extracellular-facing. A helical transmembrane segment spans residues 962–981 (ILFYFDIVFTTIFTIEIALK). At 982-997 (MTAYGAFLHKGSFCRN) the chain is on the cytoplasmic side. The helical transmembrane segment at 998-1016 (YFNILDLLVVSVSLISFGI) threads the bilayer. At 1017-1023 (QSSAINV) the chain is on the extracellular side. The chain crosses the membrane as a helical span at residues 1024–1042 (VKILRVLRVLRPLRAINRA). At 1043-1061 (KGLKHVVQCVFVAIRTIGN) the chain is on the cytoplasmic side. The chain crosses the membrane as a helical span at residues 1062–1081 (IVIVTTLLQFMFACIGVQLF). At 1082–1131 (KGKLYTCSDSSKQTEAECKGNYITYKDGEVDHPIIQPRSWENSKFDFDNV) the chain is on the extracellular side. The cysteines at positions 1088 and 1099 are disulfide-linked. Positions 1119–1208 (RSWENSKFDF…FQEQGEQEYK (90 aa)) are dihydropyridine binding. The segment at residues 1132 to 1152 (LAAMMALFTVSTFEGWPELLY) is an intramembrane region (pore-forming). Positions 1143–1146 (TFEG) match the Selectivity filter of repeat III motif. Ca(2+) is bound at residue Glu1145. The Extracellular portion of the chain corresponds to 1153–1169 (RSIDSHTEDKGPIYNYR). A helical membrane pass occupies residues 1170–1191 (VEISIFFIIYIIIIAFFMMNIF). At 1192-1249 (VGFVIVTFQEQGEQEYKNCELDKNQRQCVEYALKARPLRRYIPKNQHQYKVWYVVNST) the chain is on the cytoplasmic side. The stretch at 1236–1509 (NQHQYKVWYV…LFVAVIMDNF (274 aa)) is one IV repeat. Residues 1250 to 1271 (YFEYLMFVLILLNTICLAMQHY) form a helical membrane-spanning segment. Residues 1272 to 1279 (GQSCLFKI) are Extracellular-facing. Residues 1280-1301 (AMNILNMLFTGLFTVEMILKLI) form a helical membrane-spanning segment. At 1302–1311 (AFKPKGYFSD) the chain is on the cytoplasmic side. Residues 1312–1331 (PWNVFDFLIVIGSIIDVILS) form a helical membrane-spanning segment. The Extracellular segment spans residues 1332–1354 (ETNPAEHTQCSPSMNAEENSRIS). A helical transmembrane segment spans residues 1355–1373 (ITFFRLFRVMRLVKLLSRG). At 1374 to 1391 (EGIRTLLWTFIKSFQALP) the chain is on the cytoplasmic side. Residues 1392–1412 (YVALLIVMLFFIYAVIGMQVF) traverse the membrane as a helical segment. Residues 1413 to 1434 (GKIALNDTTEINRNNNFQTFPQ) lie on the Extracellular side of the membrane. Residue Asn1418 is glycosylated (N-linked (GlcNAc...) asparagine). Residues 1435 to 1453 (AVLLLFRCATGEAWQDIML) constitute an intramembrane region (pore-forming). Positions 1444–1447 (TGEA) match the Selectivity filter of repeat IV motif. The Extracellular portion of the chain corresponds to 1454–1481 (ACMPGKKCAPESEPHNSTEGETPCGSSF). A dihydropyridine binding region spans residues 1460-1528 (KCAPESEPHN…LGPHHLDEFK (69 aa)). A disulfide bridge connects residues Cys1461 and Cys1477. An N-linked (GlcNAc...) asparagine glycan is attached at Asn1469. Residues 1474–1516 (ETPCGSSFAVFYFISFYMLCAFLIINLFVAVIMDNFDYLTRDW) are phenylalkylamine binding. Residues 1482-1506 (AVFYFISFYMLCAFLIINLFVAVIM) form a helical membrane-spanning segment. The Cytoplasmic segment spans residues 1507 to 2171 (DNFDYLTRDW…ADRRAGVSSL (665 aa)). The interval 1641-1668 (DEVTVGKFYATFLIQEYFRKFKKRKEQG) is important for interaction with STAC1, STAC2 and STAC3. Positions 1647–1667 (KFYATFLIQEYFRKFKKRKEQ) are calmodulin-binding IQ region. An important for localization in at the junctional membrane region spans residues 1681-1700 (LQAGLRTLHDIGPEIRRAIS). A phosphoserine mark is found at Ser1700 and Ser1721. The disordered stretch occupies residues 1760–1797 (ISKAGNNQGDTESPSHEKLVDSTFTPSSYSSTGSNANI). A compositionally biased stretch (polar residues) spans 1781–1793 (STFTPSSYSSTGS). Ser1928 is modified (phosphoserine; by PKA). 3 disordered regions span residues 1971 to 2014 (RSHS…EKLN), 2026 to 2060 (SGENSPCRGDSSAARRARPVSLTVPSQAGAQGRQF), and 2114 to 2155 (SGGA…PGCG). The span at 2130–2140 (NRRDPGRDRAG) shows a compositional bias: basic and acidic residues.

It belongs to the calcium channel alpha-1 subunit (TC 1.A.1.11) family. CACNA1C subfamily. As to quaternary structure, component of a calcium channel complex consisting of a pore-forming alpha subunit (CACNA1C) and ancillary beta, gamma and delta subunits. The channel complex contains alpha, beta, gamma and delta subunits in a 1:1:1:1 ratio, i.e. it contains only one of each type of subunit. CACNA1C channel activity is modulated by ancillary subunits, such as CACNB1, CACNB2, CACNB3, CACNA2D1 and CACNA2D4. Interacts with CACNB1. Interacts with CACNB2. Identified in a complex with CACNA2D4 and CACNB3. Interacts with CACNB3. Interacts with CACNA2D1. Interacts with the gamma subunits CACNG4, CACNG6, CACNG7 and CACNG8. Interacts with CACNA2D4. Interacts with CALM1. Interacts (via the N-terminus and the C-terminal C and IQ motifs) with CABP1; this inhibits Ca(2+)-dependent channel inactivation. The binding via the C motif is calcium independent whereas the binding via IQ requires the presence of calcium and is mutually exclusive with calmodulin binding. The binding to the cytoplasmic N-terminal domain is calcium independent but is essential for the channel modulation. Interacts (via C-terminal CDB motif) with CABP5; in a calcium-dependent manner. Interacts with CIB1; the interaction increases upon cardiomyocytes hypertrophy. Interacts with STAC1, STAC2 and STAC3; this inhibits channel inactivation, probably by hindering CALM1 binding. Phosphorylation by PKA at Ser-1928 activates the channel. Elevated levels of blood glucose lead to increased phosphorylation by PKA. Expression in cardiac muscle. In lung, expressed in airway and vascular smooth muscle cells.

Its subcellular location is the cell membrane. The protein localises to the sarcolemma. It is found in the perikaryon. The protein resides in the postsynaptic density membrane. It localises to the cell projection. Its subcellular location is the dendrite. The protein localises to the T-tubule. The enzyme catalyses Ca(2+)(in) = Ca(2+)(out). Inhibited by dihydropyridines (DHP), such as isradipine. Inhibited by nifedipine. Channel activity is regulated by Ca(2+) and calmodulin. Binding of STAC1, STAC2 or STAC3 to a region that overlaps with the calmodulin binding site inhibits channel inactivation by Ca(2+) and calmodulin. Binding of calmodulin or CABP1 at the same regulatory sites results in opposite effects on the channel function. Shear stress and pressure increases calcium channel activity. Its function is as follows. Pore-forming, alpha-1C subunit of the voltage-gated calcium channel that gives rise to L-type calcium currents. Mediates influx of calcium ions into the cytoplasm, and thereby triggers calcium release from the sarcoplasm. Plays an important role in excitation-contraction coupling in the heart. Required for normal heart development and normal regulation of heart rhythm. Required for normal contraction of smooth muscle cells in blood vessels and in the intestine. Essential for normal blood pressure regulation via its role in the contraction of arterial smooth muscle cells. Long-lasting (L-type) calcium channels belong to the 'high-voltage activated' (HVA) group. The chain is Voltage-dependent L-type calcium channel subunit alpha-1C (CACNA1C) from Oryctolagus cuniculus (Rabbit).